Reading from the N-terminus, the 459-residue chain is Ribulose bisphosphate carboxylase (459 aa).

Asparagine 111 provides a ligand contact to substrate. The active-site Proton acceptor is lysine 166. Lysine 168 lines the substrate pocket. The Mg(2+) site is built by lysine 191, aspartate 193, and glutamate 194. Residue lysine 191 is modified to N6-carboxylysine. Histidine 287 (proton acceptor) is an active-site residue. Positions 288, 321, and 368 each coordinate substrate.

The protein belongs to the RuBisCO large chain family. Type II subfamily. In terms of assembly, the complex is approximately 350 kDa when isolated from either T.denitrificans or R.sphaeroides, suggesting a homohexamer or homooctamer structure. Mg(2+) serves as cofactor.

The catalysed reaction is 2 (2R)-3-phosphoglycerate + 2 H(+) = D-ribulose 1,5-bisphosphate + CO2 + H2O. It catalyses the reaction D-ribulose 1,5-bisphosphate + O2 = 2-phosphoglycolate + (2R)-3-phosphoglycerate + 2 H(+). Its function is as follows. RuBisCO catalyzes two reactions: the carboxylation of D-ribulose 1,5-bisphosphate, the primary event in carbon dioxide fixation, as well as the oxidative fragmentation of the pentose substrate. Both reactions occur simultaneously and in competition at the same active site. This Thiobacillus denitrificans (strain ATCC 25259 / T1) protein is Ribulose bisphosphate carboxylase (cbbM).